Here is a 318-residue protein sequence, read N- to C-terminus: Thymidylate synthase (318 aa).

Residues Arg-25 and 180 to 181 each bind dUMP; that span reads RR. The active-site Nucleophile is Cys-200. DUMP-binding positions include 220–223, Asn-231, and 261–263; these read RSGD and HIY. (6R)-5,10-methylene-5,6,7,8-tetrahydrofolate is bound at residue Asp-223. Ala-317 contributes to the (6R)-5,10-methylene-5,6,7,8-tetrahydrofolate binding site.

This sequence belongs to the thymidylate synthase family. Bacterial-type ThyA subfamily. As to quaternary structure, homodimer.

It localises to the cytoplasm. The enzyme catalyses dUMP + (6R)-5,10-methylene-5,6,7,8-tetrahydrofolate = 7,8-dihydrofolate + dTMP. It participates in pyrimidine metabolism; dTTP biosynthesis. Catalyzes the reductive methylation of 2'-deoxyuridine-5'-monophosphate (dUMP) to 2'-deoxythymidine-5'-monophosphate (dTMP) while utilizing 5,10-methylenetetrahydrofolate (mTHF) as the methyl donor and reductant in the reaction, yielding dihydrofolate (DHF) as a by-product. This enzymatic reaction provides an intracellular de novo source of dTMP, an essential precursor for DNA biosynthesis. The polypeptide is Thymidylate synthase (Bacillus cytotoxicus (strain DSM 22905 / CIP 110041 / 391-98 / NVH 391-98)).